We begin with the raw amino-acid sequence, 118 residues long: T cell receptor gamma variable 8 (118 aa).

An N-terminal signal peptide occupies residues 1–17; sequence MLLALALLLAFLPPASQ. The Ig-like domain maps to 18 to 118; the sequence is KSSNLEGRTK…GVYYCATWDR (101 aa). An intrachain disulfide couples Cys-41 to Cys-113.

In terms of assembly, gamma-delta TR is a heterodimer composed of a gamma and delta chain; disulfide-linked. The gamma-delta TR is associated with the transmembrane signaling CD3 coreceptor proteins following the stoichiometry: a single gamma-delta TR heterodimer associates with one CD3D-CD3E heterodimer, one CD3G-CD3E heterodimer and one CD247 homodimer forming a stable octameric structure. Upon activation, gamma-delta TR complex associates with FCER1G to initiate intracellular signaling.

It is found in the cell membrane. Functionally, v region of the variable domain of T cell receptor (TR) gamma chain that participates in the antigen recognition. Gamma-delta TRs recognize a variety of self and foreign non-peptide antigens frequently expressed at the epithelial boundaries between the host and external environment, including endogenous lipids presented by MH-like protein CD1D and phosphoantigens presented by butyrophilin-like molecule BTN3A1. Upon antigen recognition induces rapid, innate-like immune responses involved in pathogen clearance and tissue repair. Binding of gamma-delta TR complex to antigen triggers phosphorylation of immunoreceptor tyrosine-based activation motifs (ITAMs) in the CD3 chains by the LCK and FYN kinases, allowing the recruitment, phosphorylation, and activation of ZAP70 that facilitates phosphorylation of the scaffolding proteins LCP2 and LAT. This lead to the formation of a supramolecular signalosome that recruits the phospholipase PLCG1, resulting in calcium mobilization and ERK activation, ultimately leading to T cell expansion and differentiation into effector cells. Gamma-delta TRs are produced through somatic rearrangement of a limited repertoire of variable (V), diversity (D), and joining (J) genes. The potential diversity of gamma-delta TRs is conferred by the unique ability to rearrange (D) genes in tandem and to utilize all three reading frames. The combinatorial diversity is considerably increased by the sequence exonuclease trimming and random nucleotide (N) region additions which occur during the V-(D)-J rearrangements. The sequence is that of T cell receptor gamma variable 8 from Homo sapiens (Human).